Reading from the N-terminus, the 557-residue chain is Protein Red (557 aa).

Positions 1–84 are disordered; sequence MPERDSEPFS…RKKKSYYAKL (84 aa). Residues 16 to 25 are compositionally biased toward basic and acidic residues; it reads DGHDVDDPHS. A compositionally biased stretch (low complexity) spans 42–53; that stretch reads TPRAAPTSAPPS. 2 positions are modified to N6-acetyllysine: lysine 98 and lysine 137. Lysine 151 is covalently cross-linked (Glycyl lysine isopeptide (Lys-Gly) (interchain with G-Cter in SUMO2)). The segment at 181-205 is disordered; that stretch reads KEKEEEELMEKPQKETKKDEDPENK. Serine 287 is subject to Phosphoserine. Residues 294–303 show a composition bias toward basic residues; the sequence is RNKKLKKKDK. A disordered region spans residues 294–402; that stretch reads RNKKLKKKDK…PIDVDKGPGS (109 aa). Positions 304-313 are enriched in basic and acidic residues; that stretch reads GKLEEKKPPE. Residues lysine 310 and lysine 331 each participate in a glycyl lysine isopeptide (Lys-Gly) (interchain with G-Cter in SUMO2) cross-link. The segment covering 332 to 398 has biased composition (basic and acidic residues); sequence TPRDKERERY…VDDEPIDVDK (67 aa). 17 consecutive repeat copies span residues 342-343, 344-345, 346-347, 348-349, 350-351, 352-353, 354-355, 356-357, 358-359, 360-361, 362-363, 364-365, 366-367, 368-369, 370-371, 372-373, and 374-375. The tract at residues 342-375 is 17 X 2 AA tandem repeats of R-[ED]; it reads RERERDRERDRDRDRERERERDRERERERDRERE. Glycyl lysine isopeptide (Lys-Gly) (interchain with G-Cter in SUMO2) cross-links involve residues lysine 386, lysine 388, lysine 404, and lysine 408. Residues serine 417 and serine 460 each carry the phosphoserine modification. Threonine 485 is subject to Phosphothreonine. Glycyl lysine isopeptide (Lys-Gly) (interchain with G-Cter in SUMO2) cross-links involve residues lysine 496, lysine 501, and lysine 509. A Phosphoserine modification is found at serine 536. Glycyl lysine isopeptide (Lys-Gly) (interchain with G-Cter in SUMO2) cross-links involve residues lysine 541, lysine 543, lysine 544, and lysine 553.

The protein belongs to the RED family. In terms of assembly, component of the spliceosome B complex. Interacts with SMU1. Interacts with MAD1L1. May interact with DHX15.

Its subcellular location is the nucleus. The protein localises to the nucleoplasm. It localises to the chromosome. The protein resides in the cytoplasm. It is found in the cytoskeleton. Its subcellular location is the spindle pole. Functionally, involved in pre-mRNA splicing as a component of the spliceosome. Auxiliary spliceosomal protein that regulates selection of alternative splice sites in a small set of target pre-mRNA species. Required for normal mitotic cell cycle progression. Recruits MAD1L1 and MAD2L1 to kinetochores, and is required to trigger the spindle assembly checkpoint. Required for normal accumulation of SMU1. This is Protein Red (IK) from Pongo abelii (Sumatran orangutan).